Reading from the N-terminus, the 160-residue chain is MTNIRIGQGYDVHQLTEGRKLILGGVEIPFEKGLLGHSDADALLHAVTDALLGAAGLGDIGSHFPDTAAEFKDADSRVLLRAAYQSVQAQGWQAVNVDTTVIAQKPKLAPHIPQMRANIAADLGIDISCVNIKGKTNEKLGYLGRMEGIESQAAVLLVRI.

Residues Asp-11 and His-13 each coordinate a divalent metal cation. 4-CDP-2-C-methyl-D-erythritol 2-phosphate-binding positions include Asp-11–His-13 and His-37–Ser-38. His-45 provides a ligand contact to a divalent metal cation. 4-CDP-2-C-methyl-D-erythritol 2-phosphate-binding positions include Asp-59–Gly-61 and Arg-145.

It belongs to the IspF family. As to quaternary structure, homotrimer. Requires a divalent metal cation as cofactor.

The catalysed reaction is 4-CDP-2-C-methyl-D-erythritol 2-phosphate = 2-C-methyl-D-erythritol 2,4-cyclic diphosphate + CMP. The protein operates within isoprenoid biosynthesis; isopentenyl diphosphate biosynthesis via DXP pathway; isopentenyl diphosphate from 1-deoxy-D-xylulose 5-phosphate: step 4/6. Functionally, involved in the biosynthesis of isopentenyl diphosphate (IPP) and dimethylallyl diphosphate (DMAPP), two major building blocks of isoprenoid compounds. Catalyzes the conversion of 4-diphosphocytidyl-2-C-methyl-D-erythritol 2-phosphate (CDP-ME2P) to 2-C-methyl-D-erythritol 2,4-cyclodiphosphate (ME-CPP) with a corresponding release of cytidine 5-monophosphate (CMP). The polypeptide is 2-C-methyl-D-erythritol 2,4-cyclodiphosphate synthase (Neisseria meningitidis serogroup A / serotype 4A (strain DSM 15465 / Z2491)).